The primary structure comprises 419 residues: L-rhamnose isomerase (419 aa).

Mn(2+) is bound by residues His262, Asp294, and Asp296.

This sequence belongs to the rhamnose isomerase family. As to quaternary structure, homotetramer. Requires Mn(2+) as cofactor.

Its subcellular location is the cytoplasm. It carries out the reaction L-rhamnopyranose = L-rhamnulose. It functions in the pathway carbohydrate degradation; L-rhamnose degradation; glycerone phosphate from L-rhamnose: step 1/3. Catalyzes the interconversion of L-rhamnose and L-rhamnulose. The polypeptide is L-rhamnose isomerase (Enterobacter sp. (strain 638)).